We begin with the raw amino-acid sequence, 513 residues long: Maturase K (513 aa).

The protein belongs to the intron maturase 2 family. MatK subfamily.

It is found in the plastid. The protein localises to the chloroplast. Usually encoded in the trnK tRNA gene intron. Probably assists in splicing its own and other chloroplast group II introns. In Pinus resinosa (Red pine), this protein is Maturase K.